The sequence spans 311 residues: Oxygen-dependent coproporphyrinogen-III oxidase (311 aa).

A substrate-binding site is contributed by serine 100. The a divalent metal cation site is built by histidine 104 and histidine 114. Residue histidine 114 is the Proton donor of the active site. 116 to 118 (NVR) is a binding site for substrate. Residues histidine 153 and histidine 183 each coordinate a divalent metal cation. Positions 248–283 (YAEFNLVYDRGTLFGLQSGGRTESILMSLPPIVHWE) are important for dimerization. 266–268 (GGR) provides a ligand contact to substrate.

This sequence belongs to the aerobic coproporphyrinogen-III oxidase family. In terms of assembly, homodimer. The cofactor is a divalent metal cation.

Its subcellular location is the cytoplasm. It carries out the reaction coproporphyrinogen III + O2 + 2 H(+) = protoporphyrinogen IX + 2 CO2 + 2 H2O. Its pathway is porphyrin-containing compound metabolism; protoporphyrin-IX biosynthesis; protoporphyrinogen-IX from coproporphyrinogen-III (O2 route): step 1/1. Involved in the heme biosynthesis. Catalyzes the aerobic oxidative decarboxylation of propionate groups of rings A and B of coproporphyrinogen-III to yield the vinyl groups in protoporphyrinogen-IX. The protein is Oxygen-dependent coproporphyrinogen-III oxidase of Legionella pneumophila (strain Corby).